Here is a 910-residue protein sequence, read N- to C-terminus: DNA mismatch repair protein MutS (910 aa).

Over residues 1–15 (MPRSAAQSEEQTLQG) the composition is skewed to polar residues. The interval 1–94 (MPRSAAQSEE…EPAWAHHSQV (94 aa)) is disordered. The segment covering 44-54 (DASLSADAAAR) has biased composition (low complexity). 726–733 (GPNASGKS) lines the ATP pocket.

The protein belongs to the DNA mismatch repair MutS family.

In terms of biological role, this protein is involved in the repair of mismatches in DNA. It is possible that it carries out the mismatch recognition step. This protein has a weak ATPase activity. This Synechococcus sp. (strain WH7803) protein is DNA mismatch repair protein MutS.